Consider the following 1325-residue polypeptide: uncharacterized protein (1325 aa).

The N-terminal stretch at 1–18 (MNRIYRVIWNCTLQVFQA) is a signal peptide. A lipid anchor (N-palmitoyl cysteine) is attached at cysteine 19. Residue cysteine 19 is the site of S-diacylglycerol cysteine attachment.

The protein to E.coli YfaL.

Its subcellular location is the cell membrane. This is an uncharacterized protein from Escherichia coli (strain K12).